We begin with the raw amino-acid sequence, 256 residues long: Imidazole glycerol phosphate synthase subunit HisF (256 aa).

Active-site residues include Asp11 and Asp130.

Belongs to the HisA/HisF family. Heterodimer of HisH and HisF.

The protein localises to the cytoplasm. It carries out the reaction 5-[(5-phospho-1-deoxy-D-ribulos-1-ylimino)methylamino]-1-(5-phospho-beta-D-ribosyl)imidazole-4-carboxamide + L-glutamine = D-erythro-1-(imidazol-4-yl)glycerol 3-phosphate + 5-amino-1-(5-phospho-beta-D-ribosyl)imidazole-4-carboxamide + L-glutamate + H(+). It functions in the pathway amino-acid biosynthesis; L-histidine biosynthesis; L-histidine from 5-phospho-alpha-D-ribose 1-diphosphate: step 5/9. Functionally, IGPS catalyzes the conversion of PRFAR and glutamine to IGP, AICAR and glutamate. The HisF subunit catalyzes the cyclization activity that produces IGP and AICAR from PRFAR using the ammonia provided by the HisH subunit. This chain is Imidazole glycerol phosphate synthase subunit HisF, found in Methylocella silvestris (strain DSM 15510 / CIP 108128 / LMG 27833 / NCIMB 13906 / BL2).